The chain runs to 624 residues: Phosphomethylpyrimidine synthase (624 aa).

The tract at residues 40 to 61 is disordered; that stretch reads VPMRKISQSDTPTNTGREKNPP. Polar residues predominate over residues 45-54; it reads ISQSDTPTNT. Residues asparagine 229, methionine 258, tyrosine 287, histidine 323, 343 to 345, 384 to 387, and glutamate 423 each bind substrate; these read SRG and DGLR. Histidine 427 contributes to the Zn(2+) binding site. Tyrosine 450 contributes to the substrate binding site. Histidine 491 contributes to the Zn(2+) binding site. 3 residues coordinate [4Fe-4S] cluster: cysteine 571, cysteine 574, and cysteine 579.

It belongs to the ThiC family. In terms of assembly, homodimer. The cofactor is [4Fe-4S] cluster.

It catalyses the reaction 5-amino-1-(5-phospho-beta-D-ribosyl)imidazole + S-adenosyl-L-methionine = 4-amino-2-methyl-5-(phosphooxymethyl)pyrimidine + CO + 5'-deoxyadenosine + formate + L-methionine + 3 H(+). The protein operates within cofactor biosynthesis; thiamine diphosphate biosynthesis. In terms of biological role, catalyzes the synthesis of the hydroxymethylpyrimidine phosphate (HMP-P) moiety of thiamine from aminoimidazole ribotide (AIR) in a radical S-adenosyl-L-methionine (SAM)-dependent reaction. The polypeptide is Phosphomethylpyrimidine synthase (Methylococcus capsulatus (strain ATCC 33009 / NCIMB 11132 / Bath)).